Here is a 922-residue protein sequence, read N- to C-terminus: Cell surface glycoprotein 2 (922 aa).

The first 23 residues, Met1–Ala23, serve as a signal peptide directing secretion. 7 N-linked (GlcNAc...) asparagine glycosylation sites follow: Asn37, Asn56, Asn110, Asn220, Asn251, Asn262, and Asn292. Asn307 is a glycosylation site (N-linked (GalNAc...) asparagine). 15 N-linked (GlcNAc...) asparagine glycosylation sites follow: Asn319, Asn344, Asn396, Asn437, Asn490, Asn523, Asn557, Asn574, Asn587, Asn616, Asn700, Asn717, Asn809, Asn838, and Asn847. Positions Pro816–Pro899 are disordered. Polar residues predominate over residues Tyr835–Val850. The span at Glu853 to Pro887 shows a compositional bias: acidic residues. A compositionally biased stretch (low complexity) spans Asp888–Pro899. The chain crosses the membrane as a helical span at residues Gly898–Val918. A PGF sorting signal motif is present at residues Pro899–Phe901.

This sequence belongs to the halobacterial S-layer protein family. Post-translationally, N-glycosylated on Asn-307; this N-linked glycan is a branched trisaccharide containing 2-amino-6-sulfo-2,6-dideoxy-glucose (sulfoquinovosamine). O-glycosylated on Thr residues within the DTPE repeats in the C-terminal region; glycans consist of Glc-Gal disaccharides. In terms of processing, cleaved by the archaeosortase ArtA at the C-terminus, with removal of a short hydrophobic segment. Post-translationally, lipidation.

Its subcellular location is the secreted. The protein resides in the cell wall. It is found in the S-layer. It localises to the cell membrane. S-layer protein. The S-layer is a paracrystalline mono-layered assembly of proteins which coat the surface of the cell. In H.hispanica, the S-layer contains two different glycoproteins, Slg1 and Slg2, which share highly similar amino acid sequences. The chain is Cell surface glycoprotein 2 from Haloarcula hispanica (strain ATCC 33960 / DSM 4426 / JCM 8911 / NBRC 102182 / NCIMB 2187 / VKM B-1755).